Here is a 486-residue protein sequence, read N- to C-terminus: UDP-N-acetylmuramate--L-alanine ligase (486 aa).

Position 129–135 (Gly-129–Thr-135) interacts with ATP.

This sequence belongs to the MurCDEF family.

It localises to the cytoplasm. It catalyses the reaction UDP-N-acetyl-alpha-D-muramate + L-alanine + ATP = UDP-N-acetyl-alpha-D-muramoyl-L-alanine + ADP + phosphate + H(+). It participates in cell wall biogenesis; peptidoglycan biosynthesis. Cell wall formation. The chain is UDP-N-acetylmuramate--L-alanine ligase from Vibrio atlanticus (strain LGP32) (Vibrio splendidus (strain Mel32)).